The following is a 703-amino-acid chain: Fanconi-associated nuclease 1 homolog (703 aa).

Residues Glu-529, Asp-651, Glu-666, and Val-667 each coordinate Mn(2+). The 102-residue stretch at 597–698 (YIREHQRKTF…EVDVEVCHVS (102 aa)) folds into the VRR-NUC domain.

It belongs to the FAN1 family. Mn(2+) serves as cofactor. Mg(2+) is required as a cofactor.

Its subcellular location is the nucleus. It carries out the reaction Hydrolytically removes 5'-nucleotides successively from the 3'-hydroxy termini of 3'-hydroxy-terminated oligonucleotides.. Nuclease required for the repair of DNA interstrand cross-links (ICL). Acts as a 5'-3' exonuclease that anchors at a cut end of DNA and cleaves DNA successively at every third nucleotide, allowing to excise an ICL from one strand through flanking incisions. This is Fanconi-associated nuclease 1 homolog from Schizosaccharomyces pombe (strain 972 / ATCC 24843) (Fission yeast).